Reading from the N-terminus, the 319-residue chain is Triacylglycerol lipase (319 aa).

The 279-residue stretch at 10-288 folds into the AB hydrolase-1 domain; the sequence is PVILVHGLAG…TSYHWNHLDE (279 aa). Leucine 17 is a substrate binding site. The Nucleophile role is filled by serine 87. Substrate is bound at residue glutamine 88. Cysteines 190 and 269 form a disulfide. Aspartate 241 lines the Ca(2+) pocket. Residues aspartate 263 and histidine 285 each act as charge relay system in the active site. Aspartate 287, glutamine 291, and valine 295 together coordinate Ca(2+).

This sequence belongs to the AB hydrolase superfamily. Pseudomonas lipase family. As to quaternary structure, monomer. Interacts with lipase-specific foldase Lif. The cofactor is Ca(2+).

The protein resides in the secreted. The enzyme catalyses a triacylglycerol + H2O = a diacylglycerol + a fatty acid + H(+). Its function is as follows. Catalyzes the hydrolysis of triacylglycerol. This Pseudarthrobacter phenanthrenivorans (Arthrobacter phenanthrenivorans) protein is Triacylglycerol lipase.